Here is a 315-residue protein sequence, read N- to C-terminus: Glutathione synthetase (315 aa).

Residues 125 to 310 form the ATP-grasp domain; it reads KLFTAWFSDL…ITGMLMDAIE (186 aa). 151–207 serves as a coordination point for ATP; the sequence is WEKHSDIILKPLDGMGGASIFRVKEGDPNLGVIAETLTEHGTRYCMAQNYLPAIKDG. 2 residues coordinate Mg(2+): Glu-281 and Asn-283.

The protein belongs to the prokaryotic GSH synthase family. The cofactor is Mg(2+). It depends on Mn(2+) as a cofactor.

It catalyses the reaction gamma-L-glutamyl-L-cysteine + glycine + ATP = glutathione + ADP + phosphate + H(+). Its pathway is sulfur metabolism; glutathione biosynthesis; glutathione from L-cysteine and L-glutamate: step 2/2. The sequence is that of Glutathione synthetase from Escherichia coli O157:H7.